We begin with the raw amino-acid sequence, 303 residues long: D-alanyl-D-alanine carboxypeptidase (303 aa).

A helical transmembrane segment spans residues 7–23; that stretch reads LLLLLFLIYLGYDYVNE. Residues 37 to 56 are disordered; sequence DQNPKEHLENSGTSENTQEK. Residues 154 to 156 and Ser-161 contribute to the substrate site; that span reads YAL. His-163 and Asp-170 together coordinate Zn(2+). Glu-213 serves as the catalytic Proton donor/acceptor. Residue His-216 coordinates Zn(2+).

It belongs to the peptidase M15B family. The cofactor is Zn(2+).

Its subcellular location is the cell membrane. Its activity is regulated as follows. The DD-carboxypeptidase activity is not inhibited by beta-lactam antibiotics. Cleaves the C-terminal D-alanine residue of UDP-muramyl-pentapeptide (UDP-MurNAc-L-Ala-D-Glu-mDAP-D-Ala-D-Ala) or diacetyl-L-Lys-D-Ala-D-Ala. However the physiological substrate likely contains L-Lys instead of mDAP at the third position of the pentapeptide. Also releases the C-terminal D-lactate from UDP-MurNAc-L-Ala-D-Glu-mDAP-D-Ala-D-lactate, a depsipeptide produced by the vancomycin resistance protein VanA. Therefore, VanY should contribute in vivo to the hydrolysis of both the D-alanyl-D-alanine- and the depsipeptide-containing peptidoglycan precursors. Is not necessary for vancomycin resistance of E.faecium BM4147 and perhaps not W14-9. Does not display transpeptidase or beta-lactamase activities. This Enterococcus faecium (Streptococcus faecium) protein is D-alanyl-D-alanine carboxypeptidase.